The primary structure comprises 150 residues: Ribosome-binding factor A (150 aa).

The segment at 126–150 (EVARDLSHDDDEDGGADEAPRNGDE) is disordered.

It belongs to the RbfA family. Monomer. Binds 30S ribosomal subunits, but not 50S ribosomal subunits or 70S ribosomes.

It localises to the cytoplasm. One of several proteins that assist in the late maturation steps of the functional core of the 30S ribosomal subunit. Associates with free 30S ribosomal subunits (but not with 30S subunits that are part of 70S ribosomes or polysomes). Required for efficient processing of 16S rRNA. May interact with the 5'-terminal helix region of 16S rRNA. This chain is Ribosome-binding factor A, found in Brucella suis (strain ATCC 23445 / NCTC 10510).